The following is a 156-amino-acid chain: MRNPAKQEDLIKAFKALLKEEKFSSQGEIVLALQEEGFENINQSKVSRMLTKFGAVRTRNAKMEMVYCLPAELGVPTTSSPLKNLVLDVDYNDSVVVINTSPGAAQLIARLLDSLGKAEGILGSIAGDDTIFTTPARGFTVEQLHEAILRLFEQEL.

Belongs to the ArgR family.

It is found in the cytoplasm. Its pathway is amino-acid biosynthesis; L-arginine biosynthesis [regulation]. Regulates arginine biosynthesis genes. The polypeptide is Arginine repressor (Yersinia enterocolitica serotype O:8 / biotype 1B (strain NCTC 13174 / 8081)).